The chain runs to 390 residues: Formate-dependent phosphoribosylglycinamide formyltransferase (390 aa).

N(1)-(5-phospho-beta-D-ribosyl)glycinamide is bound by residues 19 to 20 (EL) and glutamate 79. Residues arginine 111, lysine 152, 157–162 (SSGKGQ), 192–195 (EGFV), and glutamate 200 each bind ATP. The 190-residue stretch at 116 to 305 (RLAAEELGLP…EFAIHARAIL (190 aa)) folds into the ATP-grasp domain. Mg(2+)-binding residues include glutamate 264 and glutamate 276. N(1)-(5-phospho-beta-D-ribosyl)glycinamide contacts are provided by residues aspartate 283, lysine 353, and 360–361 (RR).

The protein belongs to the PurK/PurT family. In terms of assembly, homodimer.

It catalyses the reaction N(1)-(5-phospho-beta-D-ribosyl)glycinamide + formate + ATP = N(2)-formyl-N(1)-(5-phospho-beta-D-ribosyl)glycinamide + ADP + phosphate + H(+). It functions in the pathway purine metabolism; IMP biosynthesis via de novo pathway; N(2)-formyl-N(1)-(5-phospho-D-ribosyl)glycinamide from N(1)-(5-phospho-D-ribosyl)glycinamide (formate route): step 1/1. In terms of biological role, involved in the de novo purine biosynthesis. Catalyzes the transfer of formate to 5-phospho-ribosyl-glycinamide (GAR), producing 5-phospho-ribosyl-N-formylglycinamide (FGAR). Formate is provided by PurU via hydrolysis of 10-formyl-tetrahydrofolate. The chain is Formate-dependent phosphoribosylglycinamide formyltransferase from Marinobacter nauticus (strain ATCC 700491 / DSM 11845 / VT8) (Marinobacter aquaeolei).